Consider the following 100-residue polypeptide: MKRLLVSLRVWMVFLMNWVTPDRKTAAAAVYSAQRTYQRKAAVQAAGLVSFYEWRMAVNEEEKQKAKAAALYKRRCLQAFKESPKQERAGPHLYMAVKRR.

The first 26 residues, 1–26 (MKRLLVSLRVWMVFLMNWVTPDRKTA), serve as a signal peptide directing secretion.

This is an uncharacterized protein from Bacillus subtilis (strain 168).